The primary structure comprises 567 residues: Polyadenylate-binding protein-interacting protein 7 (567 aa).

Residues 1-22 are disordered; sequence MSLTKKASEPKLSGTSIKPTTL. Positions 13 to 22 are enriched in polar residues; sequence SGTSIKPTTL. Residues 21 to 31 carry the PAM2-like motif; sequence TLNPHAAEFVP. One can recognise a CUE domain in the interval 215 to 259; sequence DMEVNPVDFLASQFPGFAAESLAEVYFANGCDLQLTIEMLTQLEL. Residues 355 to 387 are disordered; sequence RNDSADSSIGSSRNSGAYKSGRGRSIYSDKLQS. A compositionally biased stretch (polar residues) spans 359–371; it reads ADSSIGSSRNSGA. A Smr domain is found at 485-567; sequence IDLHGLHVSE…QAGLLRVIIY (83 aa).

In terms of assembly, interacts with MPC and PAB2. Expressed in cauline leaves, stems, rosette leaves, immature siliques and primary inflorescences.

This chain is Polyadenylate-binding protein-interacting protein 7 (CID7), found in Arabidopsis thaliana (Mouse-ear cress).